The chain runs to 154 residues: Terephthalate 1,2-dioxygenase, terminal oxygenase component subunit beta 2 (154 aa).

The protein belongs to the bacterial ring-hydroxylating dioxygenase beta subunit family. Heterotetramer composed of 2 alpha (TphA2I and TphA2II) and 2 beta (TphA3I and TphA3II) subunits. Part of a multicomponent enzyme system composed of a reductase (TphA1I or TphA1II) and a two-subunit oxygenase component (TphA2I or TphA2II and TphA3I or TphA3II). It depends on Fe cation as a cofactor.

The enzyme catalyses terephthalate + NADH + O2 + H(+) = (3S,4R)-3,4-dihydroxycyclohexa-1,5-diene-1,4-dicarboxylate + NAD(+). With respect to regulation, inhibited by EDTA. Its function is as follows. Component of the terephthalate 1,2-dioxygenase multicomponent enzyme system which catalyzes the dioxygenation of terephthalate (TER/TPA) to 1,2-dihydroxy-3,5-cyclohexadiene-1,4-dicarboxylic acid (DCD). It can also use 2,5-dicarboxypyridine (PDC) and 1,4-napthalenedicarboxylic acid (NDC) as substrates, and preferentially uses NADPH which is the physiological electron donor. This is Terephthalate 1,2-dioxygenase, terminal oxygenase component subunit beta 2 (tphA3II) from Comamonas sp.